The chain runs to 284 residues: Urease accessory protein UreD (284 aa).

Belongs to the UreD family. As to quaternary structure, ureD, UreF and UreG form a complex that acts as a GTP-hydrolysis-dependent molecular chaperone, activating the urease apoprotein by helping to assemble the nickel containing metallocenter of UreC. The UreE protein probably delivers the nickel.

Its subcellular location is the cytoplasm. In terms of biological role, required for maturation of urease via the functional incorporation of the urease nickel metallocenter. This is Urease accessory protein UreD from Bordetella bronchiseptica (strain ATCC BAA-588 / NCTC 13252 / RB50) (Alcaligenes bronchisepticus).